Here is a 164-residue protein sequence, read N- to C-terminus: UPF0304 protein YfbU (164 aa).

This sequence belongs to the UPF0304 family.

The protein is UPF0304 protein YfbU of Escherichia coli O127:H6 (strain E2348/69 / EPEC).